Reading from the N-terminus, the 312-residue chain is Tyrosine recombinase XerC (312 aa).

Positions 10–101 (PDLQAARESW…GIRSLLRFLE (92 aa)) constitute a Core-binding (CB) domain. Residues 122–306 (SLPKPLTASD…DTARLLEIYE (185 aa)) enclose the Tyr recombinase domain. Catalysis depends on residues Arg-165, Lys-190, His-258, Arg-261, and His-284. The active-site O-(3'-phospho-DNA)-tyrosine intermediate is Tyr-293.

It belongs to the 'phage' integrase family. XerC subfamily. In terms of assembly, forms a cyclic heterotetrameric complex composed of two molecules of XerC and two molecules of XerD.

Its subcellular location is the cytoplasm. In terms of biological role, site-specific tyrosine recombinase, which acts by catalyzing the cutting and rejoining of the recombining DNA molecules. The XerC-XerD complex is essential to convert dimers of the bacterial chromosome into monomers to permit their segregation at cell division. It also contributes to the segregational stability of plasmids. In Mesorhizobium japonicum (strain LMG 29417 / CECT 9101 / MAFF 303099) (Mesorhizobium loti (strain MAFF 303099)), this protein is Tyrosine recombinase XerC.